A 250-amino-acid polypeptide reads, in one-letter code: Small ribosomal subunit protein uS3 (250 aa).

One can recognise a KH type-2 domain in the interval 39-109 (IRNYVQARLK…EVKIDVVEVI (71 aa)). Over residues 225-239 (INERRGDSKSRPRDP) the composition is skewed to basic and acidic residues. Residues 225-250 (INERRGDSKSRPRDPRNKRRRRTKRS) are disordered. Basic residues predominate over residues 240–250 (RNKRRRRTKRS).

It belongs to the universal ribosomal protein uS3 family. As to quaternary structure, part of the 30S ribosomal subunit. Forms a tight complex with proteins S10 and S14.

Binds the lower part of the 30S subunit head. Binds mRNA in the 70S ribosome, positioning it for translation. The polypeptide is Small ribosomal subunit protein uS3 (Chlorobium phaeobacteroides (strain DSM 266 / SMG 266 / 2430)).